The following is a 226-amino-acid chain: Cytidylate kinase (226 aa).

10 to 18 (GFSSTGKST) contributes to the ATP binding site.

It belongs to the cytidylate kinase family. Type 1 subfamily.

It localises to the cytoplasm. The catalysed reaction is CMP + ATP = CDP + ADP. It catalyses the reaction dCMP + ATP = dCDP + ADP. The sequence is that of Cytidylate kinase from Flavobacterium psychrophilum (strain ATCC 49511 / DSM 21280 / CIP 103535 / JIP02/86).